The chain runs to 542 residues: MKKGAMQKSKQWNVKGAVRLASVFHFLHSCGSGCLLPFLTLYFRHLGLSAAMIGIIMASKHLLALLWRPFSSVLARQYDKRRTVIVGSLLSSALVVLPLLLFPSAGILVESGRCNTSQPDADPTLPLAVIEQMTVPVGSNATVYSVNQTSVSTNQTLEDNTLVNHSRSARGLRSLKKEEEPHSEFLGSLKVMDAQHQMFFLVLLVTALWEFVAVPLEWTADDGLYEYLDFVDATDRHSGVKVWKHVGAAFGSCLVGVLVTNLFCRIGNSVEFYSYTVLMILTVPASALLPIYLRKRERPTSGGFKALQLVHGNPQAILCAVTVILTGMVTSAVSDFLLWLMQDCGAMEIHMGICLALAHLSHTGFSPIAGPLSRFLKYHGWMLVLAVVGLAMQCLYYSFLWSPWAVMPAQLLAGFSTGALWWSVTSQSEDIATPGTEKTILRLFEAFSLDMGAALGSLIAGFVVQKFGVNVLFQGASVMLAVWSSALAVLKWKIPRQRRINYSRLLAADTEVSESESDQEKDWLETAMEDDRRNNKWTVNKS.

The next 11 membrane-spanning stretches (helical) occupy residues 46–66, 89–109, 198–218, 246–266, 272–292, 321–341, 352–372, 381–401, 404–424, 444–464, and 469–489; these read LGLS…LALL, LLSS…GILV, MFFL…PLEW, VGAA…FCRI, FYSY…LPIY, VTVI…LWLM, GICL…AGPL, WMLV…SFLW, WAVM…WWSV, FEAF…GFVV, and VNVL…ALAV.

This sequence belongs to the major facilitator superfamily. MFSD6 family.

Its subcellular location is the membrane. In Danio rerio (Zebrafish), this protein is Major facilitator superfamily domain-containing protein 6-like (mfsd6l).